The primary structure comprises 228 residues: 2,3-bisphosphoglycerate-dependent phosphoglycerate mutase (228 aa).

Residues 8 to 15 (RHGQSEWN), 21 to 22 (TG), Arg60, 87 to 90 (ERHY), Lys98, 114 to 115 (RR), and 183 to 184 (GN) contribute to the substrate site. The Tele-phosphohistidine intermediate role is filled by His9. Glu87 (proton donor/acceptor) is an active-site residue.

Belongs to the phosphoglycerate mutase family. BPG-dependent PGAM subfamily.

It catalyses the reaction (2R)-2-phosphoglycerate = (2R)-3-phosphoglycerate. Its pathway is carbohydrate degradation; glycolysis; pyruvate from D-glyceraldehyde 3-phosphate: step 3/5. In terms of biological role, catalyzes the interconversion of 2-phosphoglycerate and 3-phosphoglycerate. The polypeptide is 2,3-bisphosphoglycerate-dependent phosphoglycerate mutase (Staphylococcus aureus (strain MRSA252)).